Consider the following 279-residue polypeptide: 2-dehydro-3-deoxyphosphooctonate aldolase (279 aa).

Belongs to the KdsA family.

It localises to the cytoplasm. The enzyme catalyses D-arabinose 5-phosphate + phosphoenolpyruvate + H2O = 3-deoxy-alpha-D-manno-2-octulosonate-8-phosphate + phosphate. Its pathway is carbohydrate biosynthesis; 3-deoxy-D-manno-octulosonate biosynthesis; 3-deoxy-D-manno-octulosonate from D-ribulose 5-phosphate: step 2/3. It functions in the pathway bacterial outer membrane biogenesis; lipopolysaccharide biosynthesis. The chain is 2-dehydro-3-deoxyphosphooctonate aldolase from Azoarcus sp. (strain BH72).